Here is a 619-residue protein sequence, read N- to C-terminus: Mitogen-activated protein kinase kinase kinase 2 (619 aa).

Disordered stretches follow at residues 25 to 44, 126 to 168, 201 to 245, and 289 to 355; these read LSLQETRKAKPSSPKKQNDV, QATN…PPPG, LDPL…DNHQ, and RTQG…APTN. The residue at position 26 (serine 26) is a Phosphoserine. Positions 43–122 constitute a PB1 domain; sequence DVRVKFEHRG…KSLKILLVVN (80 aa). Residues 126 to 143 show a composition bias toward polar residues; that stretch reads QATNLEPSPSPEDLNNTP. Serine 153 and serine 164 each carry phosphoserine. The span at 203–219 shows a compositional bias: low complexity; that stretch reads PLSLSSPENSGSGSCPS. A phosphoserine mark is found at serine 239, serine 297, serine 311, serine 331, serine 344, and serine 349. A compositionally biased stretch (polar residues) spans 290–299; the sequence is TQGTSFRSPV. Over residues 300–315 the composition is skewed to low complexity; sequence SFSPTDHSLSTSSGSS. Positions 322–332 are enriched in basic and acidic residues; it reads DDSRIRRRGSD. Positions 336-346 are enriched in polar residues; sequence PTLTVTDISPP. In terms of domain architecture, Protein kinase spans 356–616; sequence WRLGKLLGQG…AEELLRHMFV (261 aa). Residues 362–370 and lysine 385 each bind ATP; that span reads LGQGAFGRV. Aspartate 483 acts as the Proton acceptor in catalysis.

It belongs to the protein kinase superfamily. STE Ser/Thr protein kinase family. MAP kinase kinase kinase subfamily. Self-associates. Binds both upstream activators and downstream substrates in multimolecular complexes. Interacts (via the kinase catalytic domain) with STK38. Interacts with XIAP/BIRC4. Mg(2+) serves as cofactor. Ubiquitination by XIAP/BIRC4 does not lead to proteasomal degradation. In terms of processing, autophosphorylated.

The protein localises to the cytoplasm. It localises to the nucleus. The catalysed reaction is L-seryl-[protein] + ATP = O-phospho-L-seryl-[protein] + ADP + H(+). It catalyses the reaction L-threonyl-[protein] + ATP = O-phospho-L-threonyl-[protein] + ADP + H(+). With respect to regulation, activated by phosphorylation on Thr-524. Interacts with PKN2; the interaction activates PKN2 kinase activity in a MAP3K2-independent kinase activity. Component of a protein kinase signal transduction cascade. Regulates the JNK and ERK5 pathways by phosphorylating and activating MAP2K5 and MAP2K7. Plays a role in caveolae kiss-and-run dynamics. In Mus musculus (Mouse), this protein is Mitogen-activated protein kinase kinase kinase 2 (Map3k2).